Consider the following 150-residue polypeptide: MTTENRTPRIIEAKEIMTLLPHRFPFLLVDRVVDFQEGEWLKAIKNISVNEPCFTGHFPNEPILPGVLILEALAQSMGLLAFKTHEIQGGELFYFAGIDDARFKRPVLPGDQMELYVEVIKERRGITSFIGRATVNGEVACEAKLMCARR.

The active site involves H57.

This sequence belongs to the thioester dehydratase family. FabZ subfamily.

It localises to the cytoplasm. The enzyme catalyses a (3R)-hydroxyacyl-[ACP] = a (2E)-enoyl-[ACP] + H2O. Functionally, involved in unsaturated fatty acids biosynthesis. Catalyzes the dehydration of short chain beta-hydroxyacyl-ACPs and long chain saturated and unsaturated beta-hydroxyacyl-ACPs. The sequence is that of 3-hydroxyacyl-[acyl-carrier-protein] dehydratase FabZ from Actinobacillus succinogenes (strain ATCC 55618 / DSM 22257 / CCUG 43843 / 130Z).